A 636-amino-acid polypeptide reads, in one-letter code: Interleukin-27 receptor subunit alpha (636 aa).

Positions 1–32 (MRGGRGAPFWLWPLPKLALLPLLWVLFQRTRP) are cleaved as a signal peptide. Topologically, residues 33–516 (QGSAGPLQCY…HLPDNTLRWK (484 aa)) are extracellular. Residues Asn-51 and Asn-76 are each glycosylated (N-linked (GlcNAc...) asparagine). The region spanning 131 to 231 (PRLGPDVDFS…PILSFQTPPS (101 aa)) is the Fibronectin type-III 1 domain. The WSXWS motif signature appears at 217-221 (WGEWS). Residues Asn-302, Asn-311, Asn-374, Asn-382, and Asn-467 are each glycosylated (N-linked (GlcNAc...) asparagine). Fibronectin type-III domains lie at 322–417 (APRS…LAPL) and 419–511 (GPTL…LPDN). A helical transmembrane segment spans residues 517–537 (VLPGILFLWGLFLLGCGLSLA). The Cytoplasmic portion of the chain corresponds to 538–636 (TSGRCYHLRH…LGPPRPQVLA (99 aa)). The short motif at 554 to 562 (VWEKVPDPA) is the Box 1 motif element. Positions 587-636 (EVEEMEPPPVMESSQPAQATAPLDSGYEKHFLPTPEELGLLGPPRPQVLA) are disordered. Low complexity predominate over residues 618 to 628 (LPTPEELGLLG).

It belongs to the type I cytokine receptor family. Type 2 subfamily. Component of a receptor complex composed of IL6ST/GP130, IL27RA/WSX1 and CNTFR which interacts with the neuroprotective peptide humanin. Highly expressed in lymphoid tissues such as spleen, lymph nodes and peripheral blood leukocytes. Weakly expressed in other tissues examined including heart, brain, fetal and adult lung, liver, skeletal muscle, kidney, pancreas, prostate, testis, ovary, small intestine, kidney and colon. In the lymphoid system, higher level expression in CD4+ T-cell subsets than in CD8+ T-cell subsets. Also weaker expression in CD19+ B-cells and monocytes.

It is found in the membrane. Receptor for IL27. Requires IL6ST/GP130 to mediate signal transduction in response to IL27. This signaling system acts through STAT3 and STAT1. Acts as a receptor for the neuroprotective peptide humanin as part of a complex with IL6ST/GP130 and CNTFR. Involved in the regulation of Th1-type immune responses. Also appears to be involved in innate defense mechanisms. The chain is Interleukin-27 receptor subunit alpha (IL27RA) from Homo sapiens (Human).